Consider the following 854-residue polypeptide: Translation initiation factor IF-2 (854 aa).

2 disordered regions span residues 52 to 79 (RQHG…RDGG) and 128 to 265 (RKQE…HGFQ). The span at 61–75 (SQRITLQRKTTSTLS) shows a compositional bias: polar residues. Composition is skewed to basic and acidic residues over residues 128 to 150 (RKQE…RQEA) and 211 to 232 (VRHD…DNKR). The span at 247–257 (RGKLGRKNKKP) shows a compositional bias: basic residues. A tr-type G domain is found at 354 to 523 (KRAPVVTVMG…LLQAEVLELT (170 aa)). Residues 363 to 370 (GHVDHGKT) form a G1 region. GTP is bound at residue 363 to 370 (GHVDHGKT). A G2 region spans residues 388–392 (GITQH). Residues 409-412 (DTPG) are G3. 409–413 (DTPGH) is a GTP binding site. Residues 463–466 (TKID) are G4. Residues 499-501 (SAK) form a G5 region.

This sequence belongs to the TRAFAC class translation factor GTPase superfamily. Classic translation factor GTPase family. IF-2 subfamily.

Its subcellular location is the cytoplasm. Functionally, one of the essential components for the initiation of protein synthesis. Protects formylmethionyl-tRNA from spontaneous hydrolysis and promotes its binding to the 30S ribosomal subunits. Also involved in the hydrolysis of GTP during the formation of the 70S ribosomal complex. The polypeptide is Translation initiation factor IF-2 (Marinomonas sp. (strain MWYL1)).